The primary structure comprises 377 residues: Dihydroorotate dehydrogenase (quinone) (377 aa).

FMN-binding positions include Ala68–Lys72 and Thr92. Lys72 serves as a coordination point for substrate. Asn117–Phe121 contributes to the substrate binding site. FMN contacts are provided by Asn149 and Asn182. Asn182 serves as a coordination point for substrate. Ser185 acts as the Nucleophile in catalysis. Asn187 lines the substrate pocket. Lys224 and Thr252 together coordinate FMN. A substrate-binding site is contributed by Asn253 to Thr254. FMN is bound by residues Gly278, Gly307, and Tyr328–Thr329.

Belongs to the dihydroorotate dehydrogenase family. Type 2 subfamily. Monomer. FMN is required as a cofactor.

It is found in the cell membrane. It carries out the reaction (S)-dihydroorotate + a quinone = orotate + a quinol. It participates in pyrimidine metabolism; UMP biosynthesis via de novo pathway; orotate from (S)-dihydroorotate (quinone route): step 1/1. Its function is as follows. Catalyzes the conversion of dihydroorotate to orotate with quinone as electron acceptor. This is Dihydroorotate dehydrogenase (quinone) from Thermobifida fusca (strain YX).